The chain runs to 1346 residues: Adhesion G protein-coupled receptor F5 (1346 aa).

The N-terminal stretch at 1–21 (MKSPRRTTLCLMFIVIYSSKA) is a signal peptide. Over 22 to 1006 (ALNWNYESTI…MSPDSPDPSS (985 aa)) the chain is Extracellular. N-linked (GlcNAc...) asparagine glycosylation is found at Asn-73, Asn-94, Asn-106, Asn-188, Asn-256, Asn-272, Asn-301, Asn-315, Asn-328, Asn-398, Asn-472, Asn-487, Asn-505, Asn-540, Asn-627, Asn-649, Asn-666, Asn-820, Asn-931, Asn-963, and Asn-982. In terms of domain architecture, SEA spans 166–273 (LQEDVTLNMR…NSFQAVTINE (108 aa)). Ig-like domains are found at residues 267–368 (QAVT…IDVM), 369–466 (PIQI…IKVT), and 471–561 (ANLT…KDVI). Cystine bridges form between Cys-293–Cys-350 and Cys-391–Cys-449. Cys-492 and Cys-545 are joined by a disulfide. In terms of domain architecture, GAIN-B spans 842–1003 (PPLSFSQTNV…SILMSPDSPD (162 aa)). Intrachain disulfides connect Cys-954/Cys-985 and Cys-973/Cys-987. The segment at 954 to 1003 (CVFWNFRLANNTGGWDSSGCYVEEGDGDNVTCICDHLTSFSILMSPDSPD) is GPS. The interval 991–1006 (TSFSILMSPDSPDPSS) is tethered agonist. Residues 1007-1027 (LLGILLDIISYVGVGFSILSL) form a helical membrane-spanning segment. Residues 1028–1053 (AACLVVEAVVWKSVTKNRTSYMRHTC) are Cytoplasmic-facing. The helical transmembrane segment at 1054–1074 (IVNIAASLLVANTWFIVVAAI) threads the bilayer. The Extracellular portion of the chain corresponds to 1075-1090 (QDNRYILCKTACVAAT). Residues 1091 to 1111 (FFIHFFYLSVFFWMLTLGLML) form a helical membrane-spanning segment. Topologically, residues 1112-1128 (FYRLVFILHETSRSTQK) are cytoplasmic. The chain crosses the membrane as a helical span at residues 1129-1149 (AIAFCLGYGCPLAISVITLGA). Residues 1150 to 1173 (TQPREVYTRKNVCWLNWEDTKALL) lie on the Extracellular side of the membrane. The helical transmembrane segment at 1174 to 1194 (AFAIPALIIVVVNITITIVVI) threads the bilayer. The Cytoplasmic portion of the chain corresponds to 1195 to 1220 (TKILRPSIGDKPCKQEKSSLFQISKS). Residues 1221-1241 (IGVLTPLLGLTWGFGLTTVFP) form a helical membrane-spanning segment. Residues 1242 to 1244 (GTN) lie on the Extracellular side of the membrane. The chain crosses the membrane as a helical span at residues 1245 to 1265 (LVFHIIFAILNVFQGLFILLF). Over 1266–1346 (GCLWDLKVQE…NSSSASSLLN (81 aa)) the chain is Cytoplasmic. Thr-1300 is modified (phosphothreonine). Ser-1307 bears the Phosphoserine mark. The tract at residues 1327 to 1346 (TPEATSSSLENSSSASSLLN) is disordered. Residues 1329-1346 (EATSSSLENSSSASSLLN) show a composition bias toward low complexity.

Belongs to the G-protein coupled receptor 2 family. Adhesion G-protein coupled receptor (ADGR) subfamily. As to quaternary structure, homodimer; disulfide-linked. Heterodimer of 2 chains generated by proteolytic processing; the large extracellular N-terminal fragment and the membrane-bound C-terminal fragment predominantly remain associated and non-covalently linked. Fragment generates by the processing enzyme furin remains attached to the extracellular N-terminal fragment. Interacts (via N-terminal extracellular domain) with SFTPD. In terms of processing, highly glycosylated. Proteolytically cleaved at multiple sites: one in the GPS region of the GAIN-B domain (S1 site) and the other in the SEA domain (S2 site). The proteolytic cleavage at S1 site generates an extracellular subunit and a seven-transmembrane subunit. The proteolytic cleavage at S2 site generates a fragment that undergoes proteolytic cleavage by the processing enzyme furin. In terms of tissue distribution, expressed in lung endothelial cells and in alveolar type II (ATII) cells (at protein level). Expressed high levels in subcutaneous adipose tissue in lean individuals and at lower levels in visceral fat. Expression levels in subcutaneous adipose tissue drastically drop in obese individuals.

It localises to the cell membrane. As an adhesion G protein-coupled receptor (aGPCR) exhibits a large N-terminal extracellular domain containing highly conserved GPCR autoproteolysis-inducing (GAIN) domain. During synthesis, intracellular autoproteolytic processing of nascent chain within the GAIN domain generates a mature protein, consisting of an N-terminal fragment that is non-covalently linked to the C-terminal fragment. The mature protein is routed to the plasma membrane where the N- and C-terminal fragments remain associated, forming the holoreceptor. Dissociation of the aGPCR fragments stimulates G protein signaling through the action of the tethered-peptide agonist stalk that is occluded within the GAIN domain in the holoreceptor form. This dissociation might be induced by ligand binding, such as that of sFNDC4. In terms of biological role, adhesion G protein-coupled receptor. In alveolar type II (ATII or AT2) cells, required for normal lung surfactant homeostasis. Modulation of both surfactant secretion and uptake by ATII cells is mediated by the downstream activation of GNAQ/GNA11 proteins and may be a consequence of increased cortical F-actin assembly induced by ADGRF5 activation. In the kidney, may play a role in the regulation of acid excretion into the primary urine, possibly by regulating the surface expression of V-ATPase proton pump. As a receptor for soluble FNDC4 (sFNDC4), required for proper systemic glucose tolerance, specifically sensitizing white adipose tissue to insulin. Also plays a role in sFNDC4-induced decrease of local inflammation in white adipose tissue. This Homo sapiens (Human) protein is Adhesion G protein-coupled receptor F5.